Here is a 347-residue protein sequence, read N- to C-terminus: Ribosomal RNA small subunit methyltransferase C (347 aa).

Belongs to the methyltransferase superfamily. RsmC family. Monomer.

The protein localises to the cytoplasm. It catalyses the reaction guanosine(1207) in 16S rRNA + S-adenosyl-L-methionine = N(2)-methylguanosine(1207) in 16S rRNA + S-adenosyl-L-homocysteine + H(+). Its function is as follows. Specifically methylates the guanine in position 1207 of 16S rRNA in the 30S particle. The protein is Ribosomal RNA small subunit methyltransferase C of Yersinia enterocolitica serotype O:8 / biotype 1B (strain NCTC 13174 / 8081).